The sequence spans 171 residues: Protein phosphatase 1 regulatory subunit 1A (171 aa).

Met-1 carries the post-translational modification N-acetylmethionine. Residues 9 to 12 are essential for activity; it reads KIQF. The tract at residues 17-171 is disordered; the sequence is LEPHLDPEAA…PLDSQGASLV (155 aa). A compositionally biased stretch (basic and acidic residues) spans 19–29; that stretch reads PHLDPEAAEQI. Residue Thr-35 is modified to Phosphothreonine; by PKA. The essential for activity stretch occupies residues 42 to 54; that stretch reads TSDQSSPEVDEDR. Phosphoserine occurs at positions 43, 46, 47, and 67. The segment covering 122 to 133 has biased composition (polar residues); it reads GSASRPDTSGTA. A compositionally biased stretch (basic and acidic residues) spans 137-148; sequence AESKPKTQEQRG. The tract at residues 143 to 171 is interaction with PPP1R15A; it reads TQEQRGVEPSTEDLSAHMLPLDSQGASLV.

This sequence belongs to the protein phosphatase inhibitor 1 family. In terms of assembly, interacts with PPP1R15A. In terms of processing, phosphorylation of Thr-35 is required for activity.

Inhibitor of protein-phosphatase 1. This protein may be important in hormonal control of glycogen metabolism. Hormones that elevate intracellular cAMP increase I-1 activity in many tissues. I-1 activation may impose cAMP control over proteins that are not directly phosphorylated by PKA. Following a rise in intracellular calcium, I-1 is inactivated by calcineurin (or PP2B). Does not inhibit type-2 phosphatases. This chain is Protein phosphatase 1 regulatory subunit 1A (Ppp1r1a), found in Rattus norvegicus (Rat).